A 132-amino-acid polypeptide reads, in one-letter code: MRFTKVVGFLSVLGLAAVFPLTAQAEKAGTAGAGEWDKLGTYTYTYSSPTVYSTGGDFRVCLSGSTPFSVSLHLYEDDPGDNPDDYVGANYFSPGECHTFGSIGKFVDGSNNKAEFFVTDYSGKSKTVTFYD.

The first 25 residues, 1–25 (MRFTKVVGFLSVLGLAAVFPLTAQA), serve as a signal peptide directing secretion.

This is an uncharacterized protein from Bacillus subtilis (strain 168).